We begin with the raw amino-acid sequence, 41 residues long: Photosystem I reaction center subunit IX (41 aa).

Residues 7–27 (YLSTAPVVAFAWITITAGLLI) traverse the membrane as a helical segment.

This sequence belongs to the PsaJ family.

The protein localises to the plastid. It localises to the chloroplast thylakoid membrane. Its function is as follows. May help in the organization of the PsaE and PsaF subunits. The polypeptide is Photosystem I reaction center subunit IX (Oedogonium cardiacum (Filamentous green alga)).